Reading from the N-terminus, the 326-residue chain is Undecaprenyl-phosphate 4-deoxy-4-formamido-L-arabinose transferase (326 aa).

Helical transmembrane passes span Leu235–Ile255 and Val270–Leu290.

Belongs to the glycosyltransferase 2 family.

It is found in the cell inner membrane. It carries out the reaction UDP-4-deoxy-4-formamido-beta-L-arabinose + di-trans,octa-cis-undecaprenyl phosphate = 4-deoxy-4-formamido-alpha-L-arabinopyranosyl di-trans,octa-cis-undecaprenyl phosphate + UDP. Its pathway is glycolipid biosynthesis; 4-amino-4-deoxy-alpha-L-arabinose undecaprenyl phosphate biosynthesis; 4-amino-4-deoxy-alpha-L-arabinose undecaprenyl phosphate from UDP-4-deoxy-4-formamido-beta-L-arabinose and undecaprenyl phosphate: step 1/2. It participates in bacterial outer membrane biogenesis; lipopolysaccharide biosynthesis. Its function is as follows. Catalyzes the transfer of 4-deoxy-4-formamido-L-arabinose from UDP to undecaprenyl phosphate. The modified arabinose is attached to lipid A and is required for resistance to polymyxin and cationic antimicrobial peptides. This Serratia proteamaculans (strain 568) protein is Undecaprenyl-phosphate 4-deoxy-4-formamido-L-arabinose transferase.